Consider the following 691-residue polypeptide: Cyclic nucleotide-gated channel alpha-1 (691 aa).

Residues 1–168 lie on the Cytoplasmic side of the membrane; sequence MKKNIINTWY…PAGNMYYNWL (168 aa). The segment at 31-151 is disordered; that stretch reads ENGARSSFSD…KGKDKKEEEK (121 aa). Over residues 39–56 the composition is skewed to acidic residues; sequence SDDDGDDDSASMFEESEN. Basic and acidic residues-rich tracts occupy residues 57 to 76 and 112 to 151; these read ETPHARDSCRNNSQRRDPSQ and SKSGDKNENKKDSEKKKKKEKEKEKKNKEEKGKDKKEEEK. The chain crosses the membrane as a helical span at residues 169-190; it reads FCITLPVMYNWTMVIARACFDE. The Extracellular segment spans residues 191-200; that stretch reads LQSDYLEYWI. Residues 201 to 221 form a helical membrane-spanning segment; it reads IFDYLSDIVYLLDMFVRTRTG. Residues 222–246 are Cytoplasmic-facing; the sequence is YLEQGLLVREEAKLIEKYKSNLQFK. A helical membrane pass occupies residues 247–265; that stretch reads LDFLSVIPTDLLYFKLGWN. The Extracellular portion of the chain corresponds to 266–270; that stretch reads YPEIR. The helical transmembrane segment at 271–289 threads the bilayer; that stretch reads LNRLLRISRMFEFFQRTET. The Cytoplasmic portion of the chain corresponds to 290 to 296; it reads RTNYPNI. The segment at 294–402 is ion conduction pathway; sequence PNIFRISNLV…GNIGSMISNM (109 aa). Residues 297–320 traverse the membrane as a helical segment; it reads FRISNLVMYIVIIIHWNACVYFSI. The Extracellular portion of the chain corresponds to 321 to 343; it reads SKAIGFGNDTWVYPDVNDPEFGR. Asparagine 328 is a glycosylation site (N-linked (GlcNAc...) asparagine). The next 2 helical transmembrane spans lie at 344–378 and 379–403; these read LARKYVYSLYWSTLTLTTIGETPPPVRDSEYVFVV and VDFLIGVLIFATIVGNIGSMISNMN. The interval 361-364 is selectivity filter; that stretch reads TIGE. The tract at residues 404 to 480 is C-linker; that stretch reads AARAEFQARI…DTLKKVRIFA (77 aa). Over 404–691 the chain is Cytoplasmic; sequence AARAEFQARI…ESRPLDSTQD (288 aa). Residues 484 to 604 form a cyclic nucleotide-binding domain region; sequence AGLLVELVLK…EEKGKQILMK (121 aa). Glycine 544, serine 547, arginine 560, and threonine 561 together coordinate 3',5'-cyclic GMP. Residues arginine 560 and threonine 561 each coordinate 3',5'-cyclic AMP. Positions 622-676 form a coiled coil; the sequence is LEEKVTRMEGSVDLLQTRFARILAEYESMQQKLKQRLTKVERFLKPIIDTEFSAL.

Belongs to the cyclic nucleotide-gated cation channel (TC 1.A.1.5) family. CNGA1 subfamily. In terms of assembly, forms heterotetrameric channels composed of CNGA1 and CNGB1 subunits with 3:1 stoichiometry. May also form cyclic nucleotide-activated homotetrameric channels, that are efficiently activated by saturating cGMP, but poorly activated by saturating cAMP compared to the heterotetramer with CNGB1. The channel binds Ca(2+)-bound CALM1 via CaM1 and CaM2 regions of the CNGB1 subunit; this interaction modulates the affinity of the channel for cNMPs in response to intracellular Ca(2+) levels.

It is found in the cell membrane. It carries out the reaction Ca(2+)(in) = Ca(2+)(out). The enzyme catalyses Na(+)(in) = Na(+)(out). The catalysed reaction is K(+)(in) = K(+)(out). It catalyses the reaction NH4(+)(in) = NH4(+)(out). It carries out the reaction Rb(+)(in) = Rb(+)(out). The enzyme catalyses Li(+)(in) = Li(+)(out). The catalysed reaction is Cs(+)(in) = Cs(+)(out). In terms of biological role, pore-forming subunit of the rod cyclic nucleotide-gated channel. Mediates rod photoresponses at dim light converting transient changes in intracellular cGMP levels into electrical signals. In the dark, cGMP levels are high and keep the channel open enabling a steady inward current carried by Na(+) and Ca(2+) ions that leads to membrane depolarization and neurotransmitter release from synaptic terminals. Upon photon absorption cGMP levels decline leading to channel closure and membrane hyperpolarization that ultimately slows neurotransmitter release and signals the presence of light, the end point of the phototransduction cascade. Conducts cGMP- and cAMP-gated ion currents, with permeability for monovalent and divalent cations. The selectivity for Ca(2+) over Na(+) increases with cGMP concentrations, whereas the selectivity among monovalent ions is independent of the cGMP levels. The chain is Cyclic nucleotide-gated channel alpha-1 from Canis lupus familiaris (Dog).